Consider the following 212-residue polypeptide: Ribosomal RNA small subunit methyltransferase G (212 aa).

S-adenosyl-L-methionine is bound by residues glycine 80, leucine 85, 131 to 132 (AE), and arginine 146.

The protein belongs to the methyltransferase superfamily. RNA methyltransferase RsmG family.

It is found in the cytoplasm. It catalyses the reaction guanosine(527) in 16S rRNA + S-adenosyl-L-methionine = N(7)-methylguanosine(527) in 16S rRNA + S-adenosyl-L-homocysteine. Its function is as follows. Specifically methylates the N7 position of guanine in position 527 of 16S rRNA. The polypeptide is Ribosomal RNA small subunit methyltransferase G (Xylella fastidiosa (strain M23)).